A 216-amino-acid chain; its full sequence is Cytochrome c biogenesis ATP-binding export protein CcmA (216 aa).

One can recognise an ABC transporter domain in the interval 11 to 216 (VSASKLTCIR…RKIRLDYRFV (206 aa)). Position 43–50 (43–50 (GPNGAGKT)) interacts with ATP.

It belongs to the ABC transporter superfamily. CcmA exporter (TC 3.A.1.107) family. The complex is composed of two ATP-binding proteins (CcmA) and two transmembrane proteins (CcmB).

Its subcellular location is the cell inner membrane. It catalyses the reaction heme b(in) + ATP + H2O = heme b(out) + ADP + phosphate + H(+). Functionally, part of the ABC transporter complex CcmAB involved in the biogenesis of c-type cytochromes; once thought to export heme, this seems not to be the case, but its exact role is uncertain. Responsible for energy coupling to the transport system. This Shewanella sp. (strain MR-7) protein is Cytochrome c biogenesis ATP-binding export protein CcmA.